The sequence spans 275 residues: Large ribosomal subunit protein uL2 (275 aa).

The segment at 222 to 275 (GVAMNPVDHPHGGGEGRNKGRHPTSPWGQKSKGLKTRNNKRTDSMIIRRRAKKK) is disordered. Over residues 229–239 (DHPHGGGEGRN) the composition is skewed to basic and acidic residues.

Belongs to the universal ribosomal protein uL2 family. In terms of assembly, part of the 50S ribosomal subunit. Forms a bridge to the 30S subunit in the 70S ribosome.

Functionally, one of the primary rRNA binding proteins. Required for association of the 30S and 50S subunits to form the 70S ribosome, for tRNA binding and peptide bond formation. It has been suggested to have peptidyltransferase activity; this is somewhat controversial. Makes several contacts with the 16S rRNA in the 70S ribosome. This chain is Large ribosomal subunit protein uL2, found in Psychrobacter arcticus (strain DSM 17307 / VKM B-2377 / 273-4).